A 169-amino-acid chain; its full sequence is MIFKINKIKNVHMYDVAIILILIIVVFKLIKSEDSKFLNNNVQFEQTKDNKFGVNSTKLNFLFNFLSSSSNKSVFEIQKKNINNNYNNNNYNNNSKKSYNYIIVGELNRNKIIRPSDIQREISEINTVEKTVDIKEKRLGSFKRGVLKIPLAFVQMIAISIALICLLIP.

2 helical membrane passes run 10-30 and 149-169; these read NVHM…FKLI and IPLA…LLIP.

The protein localises to the membrane. This is an uncharacterized protein from Dictyostelium discoideum (Social amoeba).